A 657-amino-acid polypeptide reads, in one-letter code: Histidine ammonia-lyase (657 aa).

The segment at residues 253–255 (ASG) is a cross-link (5-imidazolinone (Ala-Gly)). Ser-254 bears the 2,3-didehydroalanine (Ser) mark. A Phosphothreonine modification is found at Thr-396. The residue at position 635 (Ser-635) is a Phosphoserine. Phosphothreonine is present on Thr-637. The residue at position 648 (Ser-648) is a Phosphoserine.

It belongs to the PAL/histidase family. Contains an active site 4-methylidene-imidazol-5-one (MIO), which is formed autocatalytically by cyclization and dehydration of residues Ala-Ser-Gly. Liver and skin.

The enzyme catalyses L-histidine = trans-urocanate + NH4(+). Its pathway is amino-acid degradation; L-histidine degradation into L-glutamate; N-formimidoyl-L-glutamate from L-histidine: step 1/3. This Rattus norvegicus (Rat) protein is Histidine ammonia-lyase (Hal).